Reading from the N-terminus, the 346-residue chain is Tetraacyldisaccharide 4'-kinase (346 aa).

54-61 (TVGGAGKT) contributes to the ATP binding site.

This sequence belongs to the LpxK family.

The enzyme catalyses a lipid A disaccharide + ATP = a lipid IVA + ADP + H(+). Its pathway is glycolipid biosynthesis; lipid IV(A) biosynthesis; lipid IV(A) from (3R)-3-hydroxytetradecanoyl-[acyl-carrier-protein] and UDP-N-acetyl-alpha-D-glucosamine: step 6/6. Its function is as follows. Transfers the gamma-phosphate of ATP to the 4'-position of a tetraacyldisaccharide 1-phosphate intermediate (termed DS-1-P) to form tetraacyldisaccharide 1,4'-bis-phosphate (lipid IVA). The polypeptide is Tetraacyldisaccharide 4'-kinase (Rhizobium meliloti (strain 1021) (Ensifer meliloti)).